Here is a 428-residue protein sequence, read N- to C-terminus: Lysophosphatidic acid phosphatase type 6 (428 aa).

The N-terminal 32 residues, 1–32 (MITGVFSMRLWTPVGVLTSLAYCLHQRRVALA), are a transit peptide targeting the mitochondrion. The interval 58–168 (RHGARSPLKP…VFIRSTNIFR (111 aa)) is substrate binding. The active-site Nucleophile is the His59. Asp335 functions as the Proton donor in the catalytic mechanism.

The protein belongs to the histidine acid phosphatase family. As to quaternary structure, monomer. In terms of tissue distribution, highly expressed in kidney, heart, small intestine, muscle, liver, prostate, testis, ovary and weakly expressed in thymus and colon.

It is found in the mitochondrion. The enzyme catalyses a phosphate monoester + H2O = an alcohol + phosphate. The catalysed reaction is 1-(9Z-octadecenoyl)-sn-glycero-3-phosphate + H2O = 1-(9Z-octadecenoyl)-sn-glycerol + phosphate. Hydrolyzes lysophosphatidic acid (LPA) containing a medium length fatty acid chain to the corresponding monoacylglycerol. Has highest activity with lysophosphatidic acid containing myristate (C14:0), monounsaturated oleate (C18:1) or palmitate (C16:0), and lower activity with C18:0 and C6:0 lysophosphatidic acid. This Homo sapiens (Human) protein is Lysophosphatidic acid phosphatase type 6 (ACP6).